A 432-amino-acid polypeptide reads, in one-letter code: Leucine-rich repeat-containing protein ODA7 (432 aa).

LRR repeat units follow at residues 47 to 68 (NLKA…PPLA), 69 to 90 (DLKC…EAVP), 91 to 112 (GLDT…ACCP), 113 to 134 (ALRT…AHLA), and 138 to 159 (ALQT…DILK). Residues 173–211 (PVVSNIKNYRKVLVTSIPSLTYLDDRPVFDNERKIAQAW) enclose the LRRCT domain. Positions 212-243 (LEGGLEGERAMRNQLKEEEEERSRKNHEFMMQ) form a coiled coil. 2 disordered regions span residues 297 to 332 (RPGE…AAAE) and 368 to 432 (EELD…NDLD). 2 stretches are compositionally biased toward low complexity: residues 323 to 332 (GAWGSGAAAE) and 407 to 425 (VAAA…ISAA).

It belongs to the DNAAF1 family. In terms of assembly, interacts with both outer row and I1 inner row dyneins.

The protein resides in the cytoplasm. It is found in the cytoskeleton. It localises to the cilium axoneme. In terms of biological role, cilium-specific protein required for cilia structures. Axonemal dynein-associated protein that participates in a structural link between inner and outer row dyneins. The chain is Leucine-rich repeat-containing protein ODA7 (ODA7) from Chlamydomonas reinhardtii (Chlamydomonas smithii).